Consider the following 73-residue polypeptide: Dermaseptin-H4 (73 aa).

The first 22 residues, 1–22 (MAFMKKSLFLVLFLGMVSLSIC), serve as a signal peptide directing secretion. Positions 23–43 (EEEKRENEDEAKQEDDEQSEM) are excised as a propeptide. A disordered region spans residues 25–45 (EKRENEDEAKQEDDEQSEMKR). Over residues 30 to 40 (EDEAKQEDDEQ) the composition is skewed to acidic residues. Leu-70 bears the Leucine amide mark. A propeptide spanning residues 72–73 (EQ) is cleaved from the precursor.

As to expression, expressed by the skin glands.

It localises to the secreted. In terms of biological role, has antibacterial activity against the Gram-negative bacteria E.coli ATCC 11775 (MIC=0.8 uM), and the Gram-positive bacteria S.aureus ATCC 12600 (MIC=0.4 uM) and M.luteus ATCC 49732 (MIC=0.8 uM). Does not inhibit the growth of the fungus C.albicans. Probably acts by disturbing membrane functions with its amphipathic structure. This is Dermaseptin-H4 from Pithecopus azureus (Orange-legged monkey tree frog).